A 226-amino-acid chain; its full sequence is ATP synthase F(0) complex subunit a (226 aa).

6 consecutive transmembrane segments (helical) span residues 6-26 (FASF…IIMF), 68-88 (WTLM…LGLL), 97-117 (QLSM…ITGF), 138-158 (IPML…ALAV), 164-184 (ITAG…LMNI), and 189-209 (ATIT…VALI).

This sequence belongs to the ATPase A chain family. As to quaternary structure, component of the ATP synthase complex composed at least of ATP5F1A/subunit alpha, ATP5F1B/subunit beta, ATP5MC1/subunit c (homooctomer), MT-ATP6/subunit a, MT-ATP8/subunit 8, ATP5ME/subunit e, ATP5MF/subunit f, ATP5MG/subunit g, ATP5MK/subunit k, ATP5MJ/subunit j, ATP5F1C/subunit gamma, ATP5F1D/subunit delta, ATP5F1E/subunit epsilon, ATP5PF/subunit F6, ATP5PB/subunit b, ATP5PD/subunit d, ATP5PO/subunit OSCP. ATP synthase complex consists of a soluble F(1) head domain (subunits alpha(3) and beta(3)) - the catalytic core - and a membrane F(0) domain - the membrane proton channel (subunits c, a, 8, e, f, g, k and j). These two domains are linked by a central stalk (subunits gamma, delta, and epsilon) rotating inside the F1 region and a stationary peripheral stalk (subunits F6, b, d, and OSCP). Interacts with DNAJC30; interaction is direct.

Its subcellular location is the mitochondrion inner membrane. The enzyme catalyses H(+)(in) = H(+)(out). Subunit a, of the mitochondrial membrane ATP synthase complex (F(1)F(0) ATP synthase or Complex V) that produces ATP from ADP in the presence of a proton gradient across the membrane which is generated by electron transport complexes of the respiratory chain. ATP synthase complex consist of a soluble F(1) head domain - the catalytic core - and a membrane F(1) domain - the membrane proton channel. These two domains are linked by a central stalk rotating inside the F(1) region and a stationary peripheral stalk. During catalysis, ATP synthesis in the catalytic domain of F(1) is coupled via a rotary mechanism of the central stalk subunits to proton translocation. With the subunit c (ATP5MC1), forms the proton-conducting channel in the F(0) domain, that contains two crucial half-channels (inlet and outlet) that facilitate proton movement from the mitochondrial intermembrane space (IMS) into the matrix. Protons are taken up via the inlet half-channel and released through the outlet half-channel, following a Grotthuss mechanism. In Mus musculus (Mouse), this protein is ATP synthase F(0) complex subunit a.